A 420-amino-acid polypeptide reads, in one-letter code: Serine hydroxymethyltransferase (420 aa).

Residues L121 and 125-127 each bind (6S)-5,6,7,8-tetrahydrofolate; that span reads GHL. K230 bears the N6-(pyridoxal phosphate)lysine mark. (6S)-5,6,7,8-tetrahydrofolate is bound by residues E246 and 354–356; that span reads SPF.

It belongs to the SHMT family. Homodimer. Requires pyridoxal 5'-phosphate as cofactor.

It localises to the cytoplasm. The enzyme catalyses (6R)-5,10-methylene-5,6,7,8-tetrahydrofolate + glycine + H2O = (6S)-5,6,7,8-tetrahydrofolate + L-serine. It functions in the pathway one-carbon metabolism; tetrahydrofolate interconversion. The protein operates within amino-acid biosynthesis; glycine biosynthesis; glycine from L-serine: step 1/1. Catalyzes the reversible interconversion of serine and glycine with tetrahydrofolate (THF) serving as the one-carbon carrier. This reaction serves as the major source of one-carbon groups required for the biosynthesis of purines, thymidylate, methionine, and other important biomolecules. Also exhibits THF-independent aldolase activity toward beta-hydroxyamino acids, producing glycine and aldehydes, via a retro-aldol mechanism. The sequence is that of Serine hydroxymethyltransferase from Rickettsia prowazekii (strain Madrid E).